Reading from the N-terminus, the 273-residue chain is MEPIQGVVLGIIQGLTEFLPVSSSGHLVLVQHLFGITEPALFFDVSLHMGTLLAVLIVFRKDLGMMAVSVGRGIVAMFGGIAPRSDRDAEGLKLALLIVVGSVPTAILGLGLKQVDHLFFSLPLVGAMLLVTGTLLWLTRDRDTGGVGVSGFSKGRAFWIGMVQGLAVLPGISRSGATIAAGLFLGLDRATAARFSFLLCIPAIVGAELLSAVDLFSGHARLDLATVLGSLTAFVVGYGALKVLIRIVQQGRFYLFAPYCFILGGVTLWIGMR.

A run of 9 helical transmembrane segments spans residues 1 to 21 (MEPIQGVVLGIIQGLTEFLPV), 39 to 59 (PALFFDVSLHMGTLLAVLIVF), 63 to 83 (LGMMAVSVGRGIVAMFGGIAP), 92 to 112 (LKLALLIVVGSVPTAILGLGL), 118 to 138 (LFFSLPLVGAMLLVTGTLLWL), 165 to 185 (GLAVLPGISRSGATIAAGLFL), 195 to 215 (FSFLLCIPAIVGAELLSAVDL), 225 to 245 (ATVLGSLTAFVVGYGALKVLI), and 252 to 272 (RFYLFAPYCFILGGVTLWIGM).

This sequence belongs to the UppP family.

Its subcellular location is the cell inner membrane. It carries out the reaction di-trans,octa-cis-undecaprenyl diphosphate + H2O = di-trans,octa-cis-undecaprenyl phosphate + phosphate + H(+). Catalyzes the dephosphorylation of undecaprenyl diphosphate (UPP). Confers resistance to bacitracin. The sequence is that of Undecaprenyl-diphosphatase from Desulfosudis oleivorans (strain DSM 6200 / JCM 39069 / Hxd3) (Desulfococcus oleovorans).